The sequence spans 259 residues: Ditrans,polycis-undecaprenyl-diphosphate synthase ((2E,6E)-farnesyl-diphosphate specific) (259 aa).

Residue Asp32 is part of the active site. Position 32 (Asp32) interacts with Mg(2+). Substrate contacts are provided by residues 33 to 36 (GNGR), Trp37, Arg45, His49, and 77 to 79 (STE). Asn80 acts as the Proton acceptor in catalysis. Substrate contacts are provided by residues Trp81, Arg83, Arg203, and 209-211 (RIS). Position 222 (Glu222) interacts with Mg(2+).

The protein belongs to the UPP synthase family. As to quaternary structure, homodimer. Mg(2+) is required as a cofactor.

It catalyses the reaction 8 isopentenyl diphosphate + (2E,6E)-farnesyl diphosphate = di-trans,octa-cis-undecaprenyl diphosphate + 8 diphosphate. Catalyzes the sequential condensation of isopentenyl diphosphate (IPP) with (2E,6E)-farnesyl diphosphate (E,E-FPP) to yield (2Z,6Z,10Z,14Z,18Z,22Z,26Z,30Z,34E,38E)-undecaprenyl diphosphate (di-trans,octa-cis-UPP). UPP is the precursor of glycosyl carrier lipid in the biosynthesis of bacterial cell wall polysaccharide components such as peptidoglycan and lipopolysaccharide. This is Ditrans,polycis-undecaprenyl-diphosphate synthase ((2E,6E)-farnesyl-diphosphate specific) (uppS) from Lactiplantibacillus plantarum (strain ATCC BAA-793 / NCIMB 8826 / WCFS1) (Lactobacillus plantarum).